Consider the following 66-residue polypeptide: Toxin NaTx-4 (66 aa).

The LCN-type CS-alpha/beta domain occupies 1–64 (KEGYLVNKET…TFPIPGKTCS (64 aa)). 4 disulfides stabilise this stretch: Cys12–Cys63, Cys16–Cys39, Cys25–Cys44, and Cys29–Cys46.

This sequence belongs to the long (4 C-C) scorpion toxin superfamily. Sodium channel inhibitor family. As to expression, expressed by the venom gland.

It localises to the secreted. In terms of biological role, probable sodium channel inhibitor. This is Toxin NaTx-4 from Centruroides sculpturatus (Arizona bark scorpion).